We begin with the raw amino-acid sequence, 193 residues long: Glycerol-3-phosphate acyltransferase (193 aa).

A run of 5 helical transmembrane segments spans residues 2–22 (AFII…AVIV), 51–71 (QAAF…VLIA), 78–98 (GVSL…PVYF), 112–132 (VLLG…VIVV), and 154–174 (IIAG…LLIW).

The protein belongs to the PlsY family. In terms of assembly, probably interacts with PlsX.

The protein resides in the cell inner membrane. It carries out the reaction an acyl phosphate + sn-glycerol 3-phosphate = a 1-acyl-sn-glycero-3-phosphate + phosphate. It participates in lipid metabolism; phospholipid metabolism. Catalyzes the transfer of an acyl group from acyl-phosphate (acyl-PO(4)) to glycerol-3-phosphate (G3P) to form lysophosphatidic acid (LPA). This enzyme utilizes acyl-phosphate as fatty acyl donor, but not acyl-CoA or acyl-ACP. The polypeptide is Glycerol-3-phosphate acyltransferase (Coxiella burnetii (strain CbuG_Q212) (Coxiella burnetii (strain Q212))).